A 692-amino-acid polypeptide reads, in one-letter code: Proprotein convertase subtilisin/kexin type 9 (692 aa).

Residues 1 to 30 form the signal peptide; the sequence is MGTVSSRRSWWPLPLPLLLLLLLGLAGARA. The propeptide occupies 31–152; that stretch reads QEDEDGDYEE…IEEDSSVFAQ (122 aa). Residue Tyr38 is modified to Sulfotyrosine. A Phosphoserine modification is found at Ser47. One can recognise an Inhibitor I9 domain in the interval 77–149; that stretch reads TYVVVLKEET…VDYIEEDSSV (73 aa). One can recognise a Peptidase S8 domain in the interval 155 to 444; sequence PWNLERITPA…VLTPNLVAAL (290 aa). Catalysis depends on charge relay system residues Asp186 and His226. 2 cysteine pairs are disulfide-bonded: Cys223/Cys255 and Cys323/Cys358. Ser386 serves as the catalytic Charge relay system. Residues 450 to 692 form a C-terminal domain region; the sequence is RAGWQLFCRT…HLVQASQELQ (243 aa). Intrachain disulfides connect Cys457–Cys527, Cys477–Cys526, and Cys486–Cys509. The N-linked (GlcNAc...) asparagine glycan is linked to Asn533. Intrachain disulfides connect Cys534–Cys601, Cys552–Cys600, Cys562–Cys588, Cys608–Cys679, Cys626–Cys678, and Cys635–Cys654. Ser688 is subject to Phosphoserine.

It belongs to the peptidase S8 family. As to quaternary structure, monomer. Can self-associate to form dimers and higher multimers which may have increased LDLR degrading activity. The precursor protein but not the mature protein may form multimers. Interacts with APOB, VLDLR, LRP8/APOER2 and BACE1. The full-length immature form (pro-PCSK9) interacts with SCNN1A, SCNN1B and SCNN1G. The pro-PCSK9 form (via C-terminal domain) interacts with LDLR. Interacts (via the C-terminal domain) with ANXA2 (via repeat Annexin 1); the interaction inhibits the degradation of LDLR. Ca(2+) is required as a cofactor. Post-translationally, cleavage by furin and PCSK5 generates a truncated inactive protein that is unable to induce LDLR degradation. In terms of processing, undergoes autocatalytic cleavage in the endoplasmic reticulum to release the propeptide from the N-terminus and the cleavage of the propeptide is strictly required for its maturation and activation. The cleaved propeptide however remains associated with the catalytic domain through non-covalent interactions, preventing potential substrates from accessing its active site. As a result, it is secreted from cells as a propeptide-containing, enzymatically inactive protein. Phosphorylation protects the propeptide against proteolysis.

The protein resides in the cytoplasm. It is found in the secreted. Its subcellular location is the endosome. The protein localises to the lysosome. It localises to the cell surface. The protein resides in the endoplasmic reticulum. It is found in the golgi apparatus. Its activity is regulated as follows. Its proteolytic activity is autoinhibited by the non-covalent binding of the propeptide to the catalytic domain. Inhibited by EGTA. Functionally, crucial player in the regulation of plasma cholesterol homeostasis. Binds to low-density lipid receptor family members: low density lipoprotein receptor (LDLR), very low density lipoprotein receptor (VLDLR), apolipoprotein E receptor (LRP1/APOER) and apolipoprotein receptor 2 (LRP8/APOER2), and promotes their degradation in intracellular acidic compartments. Acts via a non-proteolytic mechanism to enhance the degradation of the hepatic LDLR through a clathrin LDLRAP1/ARH-mediated pathway. May prevent the recycling of LDLR from endosomes to the cell surface or direct it to lysosomes for degradation. Can induce ubiquitination of LDLR leading to its subsequent degradation. Inhibits intracellular degradation of APOB via the autophagosome/lysosome pathway in a LDLR-independent manner. Involved in the disposal of non-acetylated intermediates of BACE1 in the early secretory pathway. Inhibits epithelial Na(+) channel (ENaC)-mediated Na(+) absorption by reducing ENaC surface expression primarily by increasing its proteasomal degradation. Regulates neuronal apoptosis via modulation of LRP8/APOER2 levels and related anti-apoptotic signaling pathways. This chain is Proprotein convertase subtilisin/kexin type 9 (PCSK9), found in Colobus guereza (Mantled guereza).